Consider the following 92-residue polypeptide: DNA-directed RNA polymerase subunit Rpo11 (92 aa).

This sequence belongs to the archaeal Rpo11/eukaryotic RPB11/RPC19 RNA polymerase subunit family. As to quaternary structure, part of the 13-subunit RNA polymerase complex.

It is found in the cytoplasm. The enzyme catalyses RNA(n) + a ribonucleoside 5'-triphosphate = RNA(n+1) + diphosphate. Its function is as follows. DNA-dependent RNA polymerase (RNAP) catalyzes the transcription of DNA into RNA using the four ribonucleoside triphosphates as substrates. The protein is DNA-directed RNA polymerase subunit Rpo11 of Saccharolobus shibatae (strain ATCC 51178 / DSM 5389 / JCM 8931 / NBRC 15437 / B12) (Sulfolobus shibatae).